We begin with the raw amino-acid sequence, 333 residues long: D-alanine--D-alanine ligase (333 aa).

One can recognise an ATP-grasp domain in the interval 124-329 (KMWFSALGIP…FTEYLYSNIK (206 aa)). 154-209 (ALETWGSVFIKAASQGSSVGCYRVDSIDELASSLKEAFSYSPYVVVEKTIHARELE) serves as a coordination point for ATP. Mg(2+)-binding residues include D283, E296, and N298.

This sequence belongs to the D-alanine--D-alanine ligase family. Requires Mg(2+) as cofactor. Mn(2+) serves as cofactor.

Its subcellular location is the cytoplasm. The enzyme catalyses 2 D-alanine + ATP = D-alanyl-D-alanine + ADP + phosphate + H(+). Its pathway is cell wall biogenesis; peptidoglycan biosynthesis. Its function is as follows. Cell wall formation. In Shewanella sediminis (strain HAW-EB3), this protein is D-alanine--D-alanine ligase.